We begin with the raw amino-acid sequence, 339 residues long: Ketol-acid reductoisomerase (NADP(+)) (339 aa).

In terms of domain architecture, KARI N-terminal Rossmann spans 1 to 182 (MRVYYDRDAD…GGGRAGIIET (182 aa)). NADP(+) is bound by residues 24–27 (YGSQ), Arg48, Ser51, Ser53, and 83–86 (DELQ). Residue His108 is part of the active site. Residue Gly134 coordinates NADP(+). Positions 183-328 (TFREECETDL…AKLRDMMPWI (146 aa)) constitute a KARI C-terminal knotted domain. Residues Asp191, Glu195, Glu227, and Glu231 each coordinate Mg(2+). Position 252 (Ser252) interacts with substrate.

This sequence belongs to the ketol-acid reductoisomerase family. Mg(2+) serves as cofactor.

The catalysed reaction is (2R)-2,3-dihydroxy-3-methylbutanoate + NADP(+) = (2S)-2-acetolactate + NADPH + H(+). It carries out the reaction (2R,3R)-2,3-dihydroxy-3-methylpentanoate + NADP(+) = (S)-2-ethyl-2-hydroxy-3-oxobutanoate + NADPH + H(+). It functions in the pathway amino-acid biosynthesis; L-isoleucine biosynthesis; L-isoleucine from 2-oxobutanoate: step 2/4. The protein operates within amino-acid biosynthesis; L-valine biosynthesis; L-valine from pyruvate: step 2/4. Involved in the biosynthesis of branched-chain amino acids (BCAA). Catalyzes an alkyl-migration followed by a ketol-acid reduction of (S)-2-acetolactate (S2AL) to yield (R)-2,3-dihydroxy-isovalerate. In the isomerase reaction, S2AL is rearranged via a Mg-dependent methyl migration to produce 3-hydroxy-3-methyl-2-ketobutyrate (HMKB). In the reductase reaction, this 2-ketoacid undergoes a metal-dependent reduction by NADPH to yield (R)-2,3-dihydroxy-isovalerate. This is Ketol-acid reductoisomerase (NADP(+)) from Rhodopseudomonas palustris (strain BisB18).